Reading from the N-terminus, the 388-residue chain is MNLHEYQAKQLFARYGLPAPAGYACTTPREAEEAASKIGSGPWVVKCQVHAGGRGKAGGVKVVNSKEEIRAFAEQWLGKRLVTYQTDAQGQPVRQILVEAATDIAKELYLGAVVDRGTRRVVFMASTEGGVEIEKVAEETPELIHKAIIDPLIGPMSYQGRELAFKLGLTGKQVSQFTKIFLGLANLFLERDLALVEINPLVITTQGDLICLDGKLGADGNALFRQAELREMHDPSQEDPREAQAAQWELNYVALDGNIGCMVNGAGLAMGTMDIVKLHGGAPANFLDVGGGATKERVTEAFKIILSDENVKAVLVNIFGGIVRCDLIADGIIGAVEEVGVHVPVVVRLEGNNAELGAKKLADSGLNIIAATSLTDAAKQAVAAVEAK.

The ATP-grasp domain occupies 9-244; sequence KQLFARYGLP…PSQEDPREAQ (236 aa). Residues lysine 46, 53–55, glutamate 99, threonine 102, and glutamate 107 contribute to the ATP site; that span reads GRG. Residues asparagine 199 and aspartate 213 each coordinate Mg(2+). Substrate-binding positions include asparagine 264 and 321–323; that span reads GIV.

This sequence belongs to the succinate/malate CoA ligase beta subunit family. As to quaternary structure, heterotetramer of two alpha and two beta subunits. Requires Mg(2+) as cofactor.

The catalysed reaction is succinate + ATP + CoA = succinyl-CoA + ADP + phosphate. It catalyses the reaction GTP + succinate + CoA = succinyl-CoA + GDP + phosphate. Its pathway is carbohydrate metabolism; tricarboxylic acid cycle; succinate from succinyl-CoA (ligase route): step 1/1. Succinyl-CoA synthetase functions in the citric acid cycle (TCA), coupling the hydrolysis of succinyl-CoA to the synthesis of either ATP or GTP and thus represents the only step of substrate-level phosphorylation in the TCA. The beta subunit provides nucleotide specificity of the enzyme and binds the substrate succinate, while the binding sites for coenzyme A and phosphate are found in the alpha subunit. The sequence is that of Succinate--CoA ligase [ADP-forming] subunit beta from Photorhabdus laumondii subsp. laumondii (strain DSM 15139 / CIP 105565 / TT01) (Photorhabdus luminescens subsp. laumondii).